Reading from the N-terminus, the 135-residue chain is uncharacterized protein (135 aa).

Residues 100-125 (KESPATSSEDISSCSDCDSERLQSDD) form a disordered region. Low complexity predominate over residues 106–115 (SSEDISSCSD).

This is an uncharacterized protein from Microplitis demolitor (Parasitoid wasp).